Consider the following 499-residue polypeptide: Glycerol kinase (499 aa).

Threonine 12 lines the ADP pocket. Residues threonine 12, threonine 13, and serine 14 each coordinate ATP. Position 12 (threonine 12) interacts with sn-glycerol 3-phosphate. Residue arginine 16 participates in ADP binding. Sn-glycerol 3-phosphate contacts are provided by arginine 82, glutamate 83, tyrosine 134, and aspartate 245. 5 residues coordinate glycerol: arginine 82, glutamate 83, tyrosine 134, aspartate 245, and glutamine 246. Threonine 267 and glycine 311 together coordinate ADP. Residues threonine 267, glycine 311, glutamine 315, and glycine 412 each coordinate ATP. ADP-binding residues include glycine 412 and asparagine 416.

It belongs to the FGGY kinase family.

It catalyses the reaction glycerol + ATP = sn-glycerol 3-phosphate + ADP + H(+). Its pathway is polyol metabolism; glycerol degradation via glycerol kinase pathway; sn-glycerol 3-phosphate from glycerol: step 1/1. Inhibited by fructose 1,6-bisphosphate (FBP). Key enzyme in the regulation of glycerol uptake and metabolism. Catalyzes the phosphorylation of glycerol to yield sn-glycerol 3-phosphate. The chain is Glycerol kinase from Acidiphilium cryptum (strain JF-5).